Here is a 298-residue protein sequence, read N- to C-terminus: 3-deoxy-manno-octulosonate cytidylyltransferase (298 aa).

A helical membrane pass occupies residues 22 to 42 (VWVLHGLALGAAAAAAAVAYL).

Belongs to the KdsB family. It depends on Mg(2+) as a cofactor. Ubiquitous.

It localises to the membrane. The catalysed reaction is 3-deoxy-alpha-D-manno-oct-2-ulosonate + CTP = CMP-3-deoxy-beta-D-manno-octulosonate + diphosphate. The protein operates within nucleotide-sugar biosynthesis; CMP-3-deoxy-D-manno-octulosonate biosynthesis; CMP-3-deoxy-D-manno-octulosonate from 3-deoxy-D-manno-octulosonate and CTP: step 1/1. Its function is as follows. Catalyzes the production of the sugar nucleotide CMP-3-deoxy-D-manno-octulosonate (CMP-KDO). CTP is the preferred nucleotide donor, and it can partially be replaced with UTP but not with ATP. Activates KDO during the biosynthesis of rhamnogalacturonan II (RG-II), a structurally complex pectic polysaccharide of the primary cell wall. RG-II is essential for the cell wall integrity of rapidly growing tissues and pollen tube growth and elongation. The chain is 3-deoxy-manno-octulosonate cytidylyltransferase from Zea mays (Maize).